The sequence spans 166 residues: Glycine-rich RNA-binding protein GRP1A (166 aa).

The 79-residue stretch at 8-86 (YRCFVGGLAW…RSITVNEAQS (79 aa)) folds into the RRM domain. The disordered stretch occupies residues 68–166 (GMNGQDLDGR…YGGSGGGGGW (99 aa)). Gly residues-rich tracts occupy residues 88-146 (GSGG…YGGG) and 153-166 (EGGGYGGSGGGGGW).

Predominantly expressed in meristematic and growing tissue.

It localises to the nucleus. In terms of biological role, may play a general role in circadian phenomena associated with meristematic tissue. In Sinapis alba (White mustard), this protein is Glycine-rich RNA-binding protein GRP1A.